Reading from the N-terminus, the 218-residue chain is Large ribosomal subunit protein mL54 (218 aa).

The protein belongs to the mitochondrion-specific ribosomal protein mL54 family. In terms of assembly, component of the mitochondrial large ribosomal subunit (mt-LSU). Mature N.crassa 74S mitochondrial ribosomes consist of a small (37S) and a large (54S) subunit. The 37S small subunit contains a 16S ribosomal RNA (16S mt-rRNA) and 32 different proteins. The 54S large subunit contains a 23S rRNA (23S mt-rRNA) and 42 different proteins.

It localises to the mitochondrion. Functionally, component of the mitochondrial ribosome (mitoribosome), a dedicated translation machinery responsible for the synthesis of mitochondrial genome-encoded proteins, including at least some of the essential transmembrane subunits of the mitochondrial respiratory chain. The mitoribosomes are attached to the mitochondrial inner membrane and translation products are cotranslationally integrated into the membrane. The chain is Large ribosomal subunit protein mL54 (mrpl37) from Neurospora crassa (strain ATCC 24698 / 74-OR23-1A / CBS 708.71 / DSM 1257 / FGSC 987).